A 568-amino-acid chain; its full sequence is 2-succinyl-5-enolpyruvyl-6-hydroxy-3-cyclohexene-1-carboxylate synthase (568 aa).

It belongs to the TPP enzyme family. MenD subfamily. As to quaternary structure, homodimer. It depends on Mg(2+) as a cofactor. Requires Mn(2+) as cofactor. The cofactor is thiamine diphosphate.

It catalyses the reaction isochorismate + 2-oxoglutarate + H(+) = 5-enolpyruvoyl-6-hydroxy-2-succinyl-cyclohex-3-ene-1-carboxylate + CO2. Its pathway is quinol/quinone metabolism; 1,4-dihydroxy-2-naphthoate biosynthesis; 1,4-dihydroxy-2-naphthoate from chorismate: step 2/7. The protein operates within cofactor biosynthesis; phylloquinone biosynthesis. Functionally, catalyzes the thiamine diphosphate-dependent decarboxylation of 2-oxoglutarate and the subsequent addition of the resulting succinic semialdehyde-thiamine pyrophosphate anion to isochorismate to yield 2-succinyl-5-enolpyruvyl-6-hydroxy-3-cyclohexene-1-carboxylate (SEPHCHC). The chain is 2-succinyl-5-enolpyruvyl-6-hydroxy-3-cyclohexene-1-carboxylate synthase from Synechococcus sp. (strain CC9902).